A 60-amino-acid chain; its full sequence is Large ribosomal subunit protein bL32 (60 aa).

The disordered stretch occupies residues M1 to K23.

The protein belongs to the bacterial ribosomal protein bL32 family.

The protein is Large ribosomal subunit protein bL32 of Wolbachia sp. subsp. Brugia malayi (strain TRS).